Here is a 379-residue protein sequence, read N- to C-terminus: Cytochrome b (379 aa).

Transmembrane regions (helical) follow at residues 33-53 (FGSLLGLCLISQILTGLFLAM), 77-98 (WLIRNLHANGASFFFICLYLHI), 113-133 (WNIGVVLFLLVMMTAFVGYVL), and 178-198 (FFAFHFLFPFVVAGATMLHLL). Residues H83 and H97 each coordinate heme b. H182 and H196 together coordinate heme b. H201 contacts a ubiquinone. Helical transmembrane passes span 226-246 (YKDLLGFIIMLTALTMLALFY), 288-308 (LGGVLALLSSILVLMVVPILH), 320-340 (ASQLLFWILVADMLVLTWIGG), and 347-367 (YIIIGQVASVLYFSLFLVLNP).

It belongs to the cytochrome b family. In terms of assembly, the cytochrome bc1 complex contains 3 respiratory subunits (MT-CYB, CYC1 and UQCRFS1), 2 core proteins (UQCRC1 and UQCRC2) and probably 6 low-molecular weight proteins. Heme b is required as a cofactor.

The protein resides in the mitochondrion inner membrane. Its function is as follows. Component of the ubiquinol-cytochrome c reductase complex (complex III or cytochrome b-c1 complex) that is part of the mitochondrial respiratory chain. The b-c1 complex mediates electron transfer from ubiquinol to cytochrome c. Contributes to the generation of a proton gradient across the mitochondrial membrane that is then used for ATP synthesis. The chain is Cytochrome b (mt-cyb) from Anguilla rostrata (American eel).